We begin with the raw amino-acid sequence, 255 residues long: Tryptophan synthase alpha chain (255 aa).

Residues E42 and D53 each act as proton acceptor in the active site.

Belongs to the TrpA family. In terms of assembly, tetramer of two alpha and two beta chains.

The catalysed reaction is (1S,2R)-1-C-(indol-3-yl)glycerol 3-phosphate + L-serine = D-glyceraldehyde 3-phosphate + L-tryptophan + H2O. It participates in amino-acid biosynthesis; L-tryptophan biosynthesis; L-tryptophan from chorismate: step 5/5. Functionally, the alpha subunit is responsible for the aldol cleavage of indoleglycerol phosphate to indole and glyceraldehyde 3-phosphate. The sequence is that of Tryptophan synthase alpha chain from Wolinella succinogenes (strain ATCC 29543 / DSM 1740 / CCUG 13145 / JCM 31913 / LMG 7466 / NCTC 11488 / FDC 602W) (Vibrio succinogenes).